A 207-amino-acid polypeptide reads, in one-letter code: FMN-dependent NADH:quinone oxidoreductase 1 (207 aa).

Residues Ser-9, 15–17, and 139–142 each bind FMN; these read SIS and TRGG.

This sequence belongs to the azoreductase type 1 family. As to quaternary structure, homodimer. It depends on FMN as a cofactor.

The catalysed reaction is 2 a quinone + NADH + H(+) = 2 a 1,4-benzosemiquinone + NAD(+). It catalyses the reaction N,N-dimethyl-1,4-phenylenediamine + anthranilate + 2 NAD(+) = 2-(4-dimethylaminophenyl)diazenylbenzoate + 2 NADH + 2 H(+). Quinone reductase that provides resistance to thiol-specific stress caused by electrophilic quinones. Its function is as follows. Also exhibits azoreductase activity. Catalyzes the reductive cleavage of the azo bond in aromatic azo compounds to the corresponding amines. The protein is FMN-dependent NADH:quinone oxidoreductase 1 of Trichormus variabilis (strain ATCC 29413 / PCC 7937) (Anabaena variabilis).